The chain runs to 512 residues: MKKTTLLVILDGWGYSDSDYFNAIKNANTPTWDSIWQEFPKTLINASSLEVGLPRSQMGNSEVGHVNIGCGRVVYQELTKIDKAIEEKTFGDNKAICAAIDNVIKNDSNLHLIGLLSPGGVHSHEEHIFEMIKIAKQKGIKRLYLHAFLDGRDTPPRSAEKSIKKADKLLQDLNLGYIASVCGRYYAMDRDNRWDRVEKAYNAIVNANADFIYDSALEALEQSYARDQSDEFVIPTCIKKDGHLVKVQDNDSVIFMNFRADRAREISHAFTDESFDHFPRKKHLNINFTTLTEYDSKLKCAVAFPPKQPINTLGEVLMKNHKTQLRIAETEKYPHVTFFFNGGREEQFEGEDRILIPSPKVATYDLQPEMSAPEVTDKLVAAINSGKYDCIVCNYANSDMVGHTGNYEAAMQAIEYLDKCIARLKDAILEHDGNMFITADHGNADMMVNPETQKPHTAHTTNLVPFIYVGHKKAQVALEHGKLSDIAPTLLNVMGIAQPKEMTGKTIFNFEK.

Mn(2+) contacts are provided by aspartate 11 and serine 61. Serine 61 functions as the Phosphoserine intermediate in the catalytic mechanism. Substrate contacts are provided by residues histidine 122, arginine 152 to aspartate 153, arginine 184, arginine 190, arginine 259 to arginine 262, and lysine 332. Mn(2+)-binding residues include aspartate 399, histidine 403, aspartate 440, histidine 441, and histidine 459.

The protein belongs to the BPG-independent phosphoglycerate mutase family. Monomer. The cofactor is Mn(2+).

The catalysed reaction is (2R)-2-phosphoglycerate = (2R)-3-phosphoglycerate. It functions in the pathway carbohydrate degradation; glycolysis; pyruvate from D-glyceraldehyde 3-phosphate: step 3/5. Its function is as follows. Catalyzes the interconversion of 2-phosphoglycerate and 3-phosphoglycerate. The sequence is that of 2,3-bisphosphoglycerate-independent phosphoglycerate mutase from Francisella tularensis subsp. tularensis (strain WY96-3418).